Here is a 308-residue protein sequence, read N- to C-terminus: Insoluble matrix shell protein 4 (308 aa).

Disordered regions lie at residues 1–21 (HGNG…GNGY), 47–104 (NTNS…PNAV), and 134–250 (YDSN…NTNS). Low complexity predominate over residues 47 to 99 (NTNSLNGNNNGNSNNNGNGNNNGNSNNNGNGNNNGNTNNGNSYDSNTNDDSNS).

In terms of tissue distribution, component of the acid-insoluble organic matrix of the calcified shell.

It is found in the secreted. The sequence is that of Insoluble matrix shell protein 4 from Ruditapes philippinarum (Japanese carpet shell).